The primary structure comprises 3421 residues: Hemocyanin 2 (3421 aa).

An N-terminal signal peptide occupies residues 1–19 (MWTILALLTATLLFEGAFS). The segment at 20-442 (VDTVVRKNVD…KPPVPVAQAN (423 aa)) is functional unit a (wall). H62 is a Cu cation binding site. C68 and C78 are oxidised to a cystine. The segment at residues 79 to 81 (CLH) is a cross-link (2'-(S-cysteinyl)-histidine (Cys-His)). The Cu cation site is built by H81, H90, H200, H204, and H231. Intrachain disulfides connect C190/C257 and C344/C356. N408 is a glycosylation site (N-linked (GlcNAc...) asparagine). The functional unit b (wall) stretch occupies residues 443-853 (LAVRKNINDL…RADAKDFGHS (411 aa)). H483 lines the Cu cation pocket. Residues C489 and C500 are joined by a disulfide bond. Positions 501 to 503 (CVH) form a cross-link, 2'-(S-cysteinyl)-histidine (Cys-His). Positions 503, 512, 622, 626, 653, and 894 each coordinate Cu cation. A disulfide bond links C612 and C678. Residues 632–673 (SEKYSMSSLHYTAFDPIFYLHHSNVDRLWAIWQALQIRRGKS) form a WD 1 repeat. The tract at residues 854-1275 (RKIRKAVDSL…DEYREAVTSA (422 aa)) is functional unit c (wall). Residues C900 and C911 are joined by a disulfide bond. The segment at residues 912–914 (CVH) is a cross-link (2'-(S-cysteinyl)-histidine (Cys-His)). Cu cation-binding residues include H914, H923, H1033, H1037, and H1063. Intrachain disulfides connect C1023–C1090 and C1180–C1187. The WD 2 repeat unit spans residues 1043–1084 (NEPYSMSSLRYTTYDPIFFLHRSNTDRLWAIWQALQKYRGKP). N1183 carries an N-linked (GlcNAc...) asparagine glycan. The tract at residues 1276–1685 (SHIRKNIRDL…NIYYDGLSQH (410 aa)) is functional unit d (wall). Residue H1313 participates in Cu cation binding. Residues C1319 and C1328 are joined by a disulfide bond. Positions 1329–1331 (CVH) form a cross-link, 2'-(S-cysteinyl)-histidine (Cys-His). Positions 1331 and 1340 each coordinate Cu cation. Residues 1387–1425 (QTFDPNPFFRGHIAFENAVTSRDPQPELWDNKDFYENVM) form a WD 3 repeat. Intrachain disulfides connect C1434-C1501 and C1590-C1599. Residues H1444, H1448, and H1475 each contribute to the Cu cation site. Residues 1454–1495 (RAKYSLSSLDYTAFDPVFFLHHANVDRIWAIWQDLQRYRKKP) form a WD 4 repeat. N-linked (GlcNAc...) asparagine glycosylation occurs at N1653. Positions 1686–2102 (NLVRKEVSSL…HGINVRHVGR (417 aa)) are functional unit e (wall). Residue H1726 coordinates Cu cation. A disulfide bond links C1732 and C1743. The segment at residues 1744–1746 (CLH) is a cross-link (2'-(S-cysteinyl)-histidine (Cys-His)). Residues H1746, H1755, H1868, H1872, and H1899 each contribute to the Cu cation site. Disulfide bonds link C1858–C1925 and C2014–C2020. Residues 1878–1919 (SKTHSIGHLHYASYDPLFYIHHSQTDRIWAIWQALQEHRGLS) form a WD 5 repeat. Residues 2103 to 2522 (NRIRMELSEL…DDHGSDHIAG (420 aa)) form a functional unit f (wall) region. Position 2143 (H2143) interacts with Cu cation. Residues C2149 and C2159 are joined by a disulfide bond. Positions 2160–2162 (CIH) form a cross-link, 2'-(S-cysteinyl)-histidine (Cys-His). Positions 2162, 2171, 2281, 2285, and 2312 each coordinate Cu cation. The WD 6 repeat unit spans residues 2168-2204 (PHWHRLYTLQMDMALLSHGSAVAIPYWDWTKPISKLP). Disulfide bonds link C2271-C2338 and C2425-C2431. Positions 2523-2929 (SGVRKDVTSL…SGHDHSERHD (407 aa)) are functional unit g (internal arc). H2563 is a Cu cation binding site. Residues C2569 and C2579 are joined by a disulfide bond. Positions 2580 to 2582 (CTH) form a cross-link, 2'-(S-cysteinyl)-histidine (Cys-His). Residues H2582, H2591, H2691, H2695, and H2722 each coordinate Cu cation. Intrachain disulfides connect C2681–C2748 and C2835–C2841. Residues 2700–2742 (GHTPYGMSSLEYTAYDPLFYLHHSNTDRIWAIWQALQKYRGFQ) form a WD 7 repeat. The disordered stretch occupies residues 2898–2927 (PSDRIKSPTIEHHGGDHHGGDTSGHDHSER). A functional unit h (internal slab) region spans residues 2930 to 3421 (GFFRKEVGSL…VRIHIHIEDE (492 aa)). Cu cation is bound at residue H2970. C2976 and C2986 are disulfide-bonded. The segment at residues 2987–2989 (CVH) is a cross-link (2'-(S-cysteinyl)-histidine (Cys-His)). 5 residues coordinate Cu cation: H2989, H2998, H3099, H3103, and H3130. Intrachain disulfides connect C3089/C3156 and C3374/C3407. The stretch at 3109-3150 (TETYSMSSLAFSAYDPVFMILHSGLDRLWIIWQELQKLRKKP) is one WD 8 repeat.

The protein belongs to the tyrosinase family. Hemocyanin subfamily. As to quaternary structure, homo-didecamer and homo-multidecamer. In terms of processing, probably N-glycosylated. Asn-2489 is buried deeply in the protein which make it inaccessible for sugar attachment. In terms of tissue distribution, hemolymph.

It is found in the secreted. It localises to the extracellular space. Functionally, hemocyanins are copper-containing oxygen carriers occurring freely dissolved in the hemolymph of many mollusks and arthropods. The protein is Hemocyanin 2 of Megathura crenulata (Giant keyhole limpet).